A 230-amino-acid polypeptide reads, in one-letter code: MILIEHVLGNVKKDPVWQEKLKHATLDLLVLDQREAQKSRCRKSTTHGLDLGISLDRNVVLADGDVLAWDEETNVAVVVQINLRDVMVIDLSELKSRSPDELIKTCFELGHALGNQHWKAVTKNNEVYVPLTVATTMMDSVMRTHGFQHLPFRFVKGGEILPQLSNSEARLLFGGAEDSDTHVHVASPLDEPHGSGLHIHAIHSHGDGDSHNHDHDHSHSHGDHDHDHKH.

Residues 197-230 (LHIHAIHSHGDGDSHNHDHDHSHSHGDHDHDHKH) are disordered. Basic and acidic residues predominate over residues 204–230 (SHGDGDSHNHDHDHSHSHGDHDHDHKH).

It belongs to the UreE family.

Its subcellular location is the cytoplasm. Functionally, involved in urease metallocenter assembly. Binds nickel. Probably functions as a nickel donor during metallocenter assembly. The polypeptide is Urease accessory protein UreE (Yersinia aldovae).